We begin with the raw amino-acid sequence, 510 residues long: GMP synthase [glutamine-hydrolyzing] (510 aa).

The Glutamine amidotransferase type-1 domain maps to 3–194; that stretch reads QILILDFGSQ…ARVICGYKEK (192 aa). Cys-80 acts as the Nucleophile in catalysis. Catalysis depends on residues His-168 and Glu-170. The GMPS ATP-PPase domain occupies 195 to 385; the sequence is WTPASIMTAS…LGLGSEIVDI (191 aa). ATP is bound at residue 222–228; that stretch reads SGGVDSS.

Homodimer.

It catalyses the reaction XMP + L-glutamine + ATP + H2O = GMP + L-glutamate + AMP + diphosphate + 2 H(+). It functions in the pathway purine metabolism; GMP biosynthesis; GMP from XMP (L-Gln route): step 1/1. Its function is as follows. Catalyzes the synthesis of GMP from XMP. The chain is GMP synthase [glutamine-hydrolyzing] from Elusimicrobium minutum (strain Pei191).